Reading from the N-terminus, the 285-residue chain is uncharacterized protein (285 aa).

A helical transmembrane segment spans residues 6 to 26 (IKYFSTIIVAVVAVLAGWWLW).

This sequence belongs to the membrane fusion protein (MFP) (TC 8.A.1) family.

Its subcellular location is the membrane. This is an uncharacterized protein from Escherichia coli (strain K12).